A 94-amino-acid chain; its full sequence is Large ribosomal subunit protein bL27 (94 aa).

The interval 1–25 (MAHKKGTGSTRNGRDSQSKRLGVKR) is disordered.

It belongs to the bacterial ribosomal protein bL27 family.

This Gloeothece citriformis (strain PCC 7424) (Cyanothece sp. (strain PCC 7424)) protein is Large ribosomal subunit protein bL27.